We begin with the raw amino-acid sequence, 832 residues long: WD repeat-containing protein 75 (832 aa).

WD repeat units lie at residues 4–43, 47–86, 90–131, 145–184, 193–230, 236–275, 278–317, 323–361, 375–424, 431–477, 490–528, 532–572, and 577–614; these read QCQIRVVRSGGSKLDYRRSVFSADGKYLICVSGDFIKVYS, EECIHALQGHRKLVTGIELNPKNHLQLYSCSLDGTIKLWD, GILI…QLVS, KEISVIIEDVSHLPKCTAIGRQCLYVASVKGVHLSIYYFK, LKATSKKGANNIFTVVACHPSEDCIATGHMDGRIRLWR, KEYTYTSLHWHHDSVMDLAFSAQGTKLLSGGVESVLVQWP, SEEKKEFLPRLGAAIEHISVSPHGTLYCTSHTDNKISIID, SGIIQGLLKGTVVKTGLIVDPRSNALVLNGKPGHLQFYS, QQEF…KLWE, SFVL…KVWM, SWLCDFVGGYHKNQATNCCFSEDGSLLAVSFDEIITVWE, WDLK…CCWN, and ALEWRAQLDATVLQPDPLSENIAVVSCSKRWSNLFLFQ. The interval 764-798 is disordered; that stretch reads SQSTEESKEDEEMKSEHSEADSSDETEEMESQKRF.

Component of the proposed t-UTP subcomplex of the ribosomal small subunit (SSU) processome. SSU processome is composed of more than 70 proteins and the RNA chaperone small nucleolar RNA (snoRNA) U3.

It is found in the nucleus. It localises to the nucleolus. Functionally, ribosome biogenesis factor. Part of the small subunit (SSU) processome, first precursor of the small eukaryotic ribosomal subunit. During the assembly of the SSU processome in the nucleolus, many ribosome biogenesis factors, an RNA chaperone and ribosomal proteins associate with the nascent pre-rRNA and work in concert to generate RNA folding, modifications, rearrangements and cleavage as well as targeted degradation of pre-ribosomal RNA by the RNA exosome. Involved in nucleolar processing of pre-18S ribosomal RNA. Required for optimal pre-ribosomal RNA transcription by RNA polymerase I. The polypeptide is WD repeat-containing protein 75 (wdr75) (Xenopus laevis (African clawed frog)).